The primary structure comprises 258 residues: Acyl-[acyl-carrier-protein]--UDP-N-acetylglucosamine O-acyltransferase (258 aa).

It belongs to the transferase hexapeptide repeat family. LpxA subfamily. As to quaternary structure, homotrimer.

The protein localises to the cytoplasm. The catalysed reaction is a (3R)-hydroxyacyl-[ACP] + UDP-N-acetyl-alpha-D-glucosamine = a UDP-3-O-[(3R)-3-hydroxyacyl]-N-acetyl-alpha-D-glucosamine + holo-[ACP]. The protein operates within glycolipid biosynthesis; lipid IV(A) biosynthesis; lipid IV(A) from (3R)-3-hydroxytetradecanoyl-[acyl-carrier-protein] and UDP-N-acetyl-alpha-D-glucosamine: step 1/6. Its function is as follows. Involved in the biosynthesis of lipid A, a phosphorylated glycolipid that anchors the lipopolysaccharide to the outer membrane of the cell. The chain is Acyl-[acyl-carrier-protein]--UDP-N-acetylglucosamine O-acyltransferase from Halorhodospira halophila (strain DSM 244 / SL1) (Ectothiorhodospira halophila (strain DSM 244 / SL1)).